The sequence spans 96 residues: Co-chaperonin GroES (96 aa).

This sequence belongs to the GroES chaperonin family. As to quaternary structure, heptamer of 7 subunits arranged in a ring. Interacts with the chaperonin GroEL.

It is found in the cytoplasm. Together with the chaperonin GroEL, plays an essential role in assisting protein folding. The GroEL-GroES system forms a nano-cage that allows encapsulation of the non-native substrate proteins and provides a physical environment optimized to promote and accelerate protein folding. GroES binds to the apical surface of the GroEL ring, thereby capping the opening of the GroEL channel. In Acidithiobacillus ferrooxidans (strain ATCC 23270 / DSM 14882 / CIP 104768 / NCIMB 8455) (Ferrobacillus ferrooxidans (strain ATCC 23270)), this protein is Co-chaperonin GroES.